The chain runs to 172 residues: Protein LHCP TRANSLOCATION DEFECT (172 aa).

The transit peptide at 1–28 (MASIPCTFQLSARASSASAAAAARRSPR) directs the protein to the chloroplast. The ANK repeat unit spans residues 114 to 146 (PVDILLMLAASEGDKPKLEELLRAGAKYDVKDV).

The protein localises to the plastid. It is found in the chloroplast. In terms of biological role, involved in the import of light-harvesting complex proteins (LHCP) and subsequent routing of these proteins to the chloroplast signal recognition particle (SRP) pathway. The chain is Protein LHCP TRANSLOCATION DEFECT (LTD) from Oryza sativa subsp. indica (Rice).